We begin with the raw amino-acid sequence, 267 residues long: Apolipoprotein A-I (267 aa).

The signal sequence occupies residues 1–18 (MKATVLTLAVLFLTGSQA). 2 consecutive repeat copies span residues 68-89 (LKLL…EQLG) and 90-111 (PVTQ…QEMS). Residues 68 to 267 (LKLLDNWDSV…EEYTKKLSTQ (200 aa)) are 10 X approximate tandem repeats. Methionine sulfoxide is present on Met110. The 3; half-length repeat unit spans residues 112–122 (KDLEEVKAKVQ). 5 repeat units span residues 123 to 144 (PYLD…QKVE), 145 to 166 (PLRA…EKLS), 167 to 188 (PLGE…THLA), 189 to 210 (PYSD…ENGG), and 211 to 232 (ARLA…EKAK). Position 136 is a methionine sulfoxide (Met136). One copy of the 9; half-length repeat lies at 233-243 (PALEDLRQGLL). Repeat 10 spans residues 244–267 (PVLESFKVSFLSALEEYTKKLSTQ).

It belongs to the apolipoprotein A1/A4/E family. Homodimer. Interacts with APOA1BP and CLU. Component of a sperm activating protein complex (SPAP), consisting of APOA1, an immunoglobulin heavy chain, an immunoglobulin light chain and albumin. Interacts with NDRG1. Interacts with SCGB3A2. Interacts with NAXE and YJEFN3. In terms of processing, glycosylated. Palmitoylated. Post-translationally, phosphorylation sites are present in the extracellular medium. In terms of tissue distribution, major protein of plasma HDL, also found in chylomicrons.

The protein resides in the secreted. Participates in the reverse transport of cholesterol from tissues to the liver for excretion by promoting cholesterol efflux from tissues and by acting as a cofactor for the lecithin cholesterol acyltransferase (LCAT). As part of the SPAP complex, activates spermatozoa motility. In Papio hamadryas (Hamadryas baboon), this protein is Apolipoprotein A-I (APOA1).